The sequence spans 703 residues: Fanconi-associated nuclease 1 homolog (703 aa).

E529, D651, E666, and V667 together coordinate Mn(2+). Residues 597-698 (YIREHQRKTF…EVDVEVCHVS (102 aa)) enclose the VRR-NUC domain.

This sequence belongs to the FAN1 family. It depends on Mn(2+) as a cofactor. The cofactor is Mg(2+).

The protein resides in the nucleus. The enzyme catalyses Hydrolytically removes 5'-nucleotides successively from the 3'-hydroxy termini of 3'-hydroxy-terminated oligonucleotides.. Functionally, nuclease required for the repair of DNA interstrand cross-links (ICL). Acts as a 5'-3' exonuclease that anchors at a cut end of DNA and cleaves DNA successively at every third nucleotide, allowing to excise an ICL from one strand through flanking incisions. In Schizosaccharomyces pombe (strain 972 / ATCC 24843) (Fission yeast), this protein is Fanconi-associated nuclease 1 homolog.